The primary structure comprises 510 residues: Arginine biosynthesis bifunctional protein ArgJ, mitochondrial (510 aa).

The span at 57 to 70 (TSTNEPSAATTNVP) shows a compositional bias: polar residues. Residues 57-76 (TSTNEPSAATTNVPHPQEAP) form a disordered region. Substrate is bound by residues threonine 222, lysine 248, threonine 267, and glutamate 364. The Nucleophile role is filled by threonine 267.

Belongs to the ArgJ family. As to quaternary structure, heterodimer of an alpha and a beta chain. In terms of processing, the alpha and beta chains are autoproteolytically processed from a single precursor protein within the mitochondrion.

The protein localises to the mitochondrion matrix. It carries out the reaction N(2)-acetyl-L-ornithine + L-glutamate = N-acetyl-L-glutamate + L-ornithine. It catalyses the reaction L-glutamate + acetyl-CoA = N-acetyl-L-glutamate + CoA + H(+). It participates in amino-acid biosynthesis; L-arginine biosynthesis; L-ornithine and N-acetyl-L-glutamate from L-glutamate and N(2)-acetyl-L-ornithine (cyclic): step 1/1. The protein operates within amino-acid biosynthesis; L-arginine biosynthesis; N(2)-acetyl-L-ornithine from L-glutamate: step 1/4. Its function is as follows. Catalyzes two activities which are involved in the cyclic version of arginine biosynthesis: the synthesis of acetylglutamate from glutamate and acetyl-CoA, and of ornithine by transacetylation between acetylornithine and glutamate. This is Arginine biosynthesis bifunctional protein ArgJ, mitochondrial from Malassezia globosa (strain ATCC MYA-4612 / CBS 7966) (Dandruff-associated fungus).